A 119-amino-acid chain; its full sequence is Platelet basic protein (119 aa).

The N-terminal stretch at 1–33 (MSLRLGAISSCTTSSPFPVLQVLLPLSLLLTTL) is a signal peptide. Positions 34-39 (VPATMG) are excised as a propeptide. Cystine bridges form between C54–C80 and C56–C96.

It localises to the secreted. In terms of biological role, chemoattractant factor for neutrophils. The protein is Platelet basic protein (PPBP) of Sus scrofa (Pig).